The sequence spans 357 residues: Guanine nucleotide-binding protein alpha-2 subunit (357 aa).

A lipid anchor (N-myristoyl glycine) is attached at Gly-2. The S-palmitoyl cysteine moiety is linked to residue Cys-4. The region spanning Asn-30–Tyr-356 is the G-alpha domain. The interval Lys-33–Thr-46 is G1 motif. Residues Glu-41, Ser-42, Gly-43, Lys-44, Ser-45, and Thr-46 each contribute to the GTP site. Ser-45 lines the Mg(2+) pocket. Ser-113 carries the phosphoserine modification. 8 residues coordinate GTP: Asp-154, Leu-179, Thr-185, Gly-207, Asn-272, Lys-273, Asp-275, and Ala-328. Positions Asp-177–Thr-185 are G2 motif. Thr-185 contacts Mg(2+). Residues Phe-200–Arg-209 form a G3 motif region. The tract at residues Ile-268–Asp-275 is G4 motif. The tract at residues Thr-326–Thr-331 is G5 motif.

The protein belongs to the G-alpha family. In terms of assembly, g proteins are composed of 3 units; alpha, beta and gamma. The alpha chain contains the guanine nucleotide binding site. Interacts with the RAP guanine nucleotide exchange factor glfB. Requires Mg(2+) as cofactor. Ser-113 is transiently phosphorylated following stimulation with extracellular cAMP.

Functionally, guanine nucleotide-binding proteins (G proteins) are involved as modulators or transducers in various transmembrane signaling systems. G alpha-2 is required for the early aggregation process and most of the known cAMP receptor-mediated responses. Interacts with downstream effector gflB, a Rap guanine nucleotide exchange factor, to regulate the balance between Ras and Rap signaling at the leading edge of chemotaxing cells. This is Guanine nucleotide-binding protein alpha-2 subunit (gpaB) from Dictyostelium discoideum (Social amoeba).